The following is a 189-amino-acid chain: 6,7-dimethyl-8-ribityllumazine synthase (189 aa).

5-amino-6-(D-ribitylamino)uracil contacts are provided by residues Trp31, 65-67 (SFE), and 89-91 (CVI). Residue 94 to 95 (ET) coordinates (2S)-2-hydroxy-3-oxobutyl phosphate. His97 (proton donor) is an active-site residue. Phe122 contacts 5-amino-6-(D-ribitylamino)uracil. Arg136 is a binding site for (2S)-2-hydroxy-3-oxobutyl phosphate.

This sequence belongs to the DMRL synthase family.

It catalyses the reaction (2S)-2-hydroxy-3-oxobutyl phosphate + 5-amino-6-(D-ribitylamino)uracil = 6,7-dimethyl-8-(1-D-ribityl)lumazine + phosphate + 2 H2O + H(+). It participates in cofactor biosynthesis; riboflavin biosynthesis; riboflavin from 2-hydroxy-3-oxobutyl phosphate and 5-amino-6-(D-ribitylamino)uracil: step 1/2. Functionally, catalyzes the formation of 6,7-dimethyl-8-ribityllumazine by condensation of 5-amino-6-(D-ribitylamino)uracil with 3,4-dihydroxy-2-butanone 4-phosphate. This is the penultimate step in the biosynthesis of riboflavin. The chain is 6,7-dimethyl-8-ribityllumazine synthase from Flavobacterium psychrophilum (strain ATCC 49511 / DSM 21280 / CIP 103535 / JIP02/86).